The primary structure comprises 286 residues: ATP synthase gamma chain (286 aa).

The protein belongs to the ATPase gamma chain family. As to quaternary structure, F-type ATPases have 2 components, CF(1) - the catalytic core - and CF(0) - the membrane proton channel. CF(1) has five subunits: alpha(3), beta(3), gamma(1), delta(1), epsilon(1). CF(0) has three main subunits: a, b and c.

The protein resides in the cell inner membrane. Functionally, produces ATP from ADP in the presence of a proton gradient across the membrane. The gamma chain is believed to be important in regulating ATPase activity and the flow of protons through the CF(0) complex. This is ATP synthase gamma chain from Shewanella pealeana (strain ATCC 700345 / ANG-SQ1).